We begin with the raw amino-acid sequence, 366 residues long: Chorismate synthase (366 aa).

Residue R48 participates in NADP(+) binding. FMN contacts are provided by residues 125–127 (RSS), 241–242 (NA), G285, 300–304 (KPTSS), and R326.

The protein belongs to the chorismate synthase family. In terms of assembly, homotetramer. The cofactor is FMNH2.

The catalysed reaction is 5-O-(1-carboxyvinyl)-3-phosphoshikimate = chorismate + phosphate. It participates in metabolic intermediate biosynthesis; chorismate biosynthesis; chorismate from D-erythrose 4-phosphate and phosphoenolpyruvate: step 7/7. In terms of biological role, catalyzes the anti-1,4-elimination of the C-3 phosphate and the C-6 proR hydrogen from 5-enolpyruvylshikimate-3-phosphate (EPSP) to yield chorismate, which is the branch point compound that serves as the starting substrate for the three terminal pathways of aromatic amino acid biosynthesis. This reaction introduces a second double bond into the aromatic ring system. This Paracoccus denitrificans (strain Pd 1222) protein is Chorismate synthase.